Consider the following 365-residue polypeptide: 3-isopropylmalate dehydrogenase (365 aa).

Glycine 80 to glutamate 91 is an NAD(+) binding site. The substrate site is built by arginine 98, arginine 108, arginine 137, and aspartate 226. Residues aspartate 226, aspartate 251, and aspartate 255 each contribute to the Mg(2+) site. Glycine 290–asparagine 301 contacts NAD(+).

This sequence belongs to the isocitrate and isopropylmalate dehydrogenases family. Homodimer. The cofactor is Mg(2+). Requires Mn(2+) as cofactor.

Its subcellular location is the cytoplasm. The enzyme catalyses (2R,3S)-3-isopropylmalate + NAD(+) = 4-methyl-2-oxopentanoate + CO2 + NADH. Its pathway is amino-acid biosynthesis; L-leucine biosynthesis; L-leucine from 3-methyl-2-oxobutanoate: step 3/4. Functionally, catalyzes the oxidation of 3-carboxy-2-hydroxy-4-methylpentanoate (3-isopropylmalate) to 3-carboxy-4-methyl-2-oxopentanoate. The product decarboxylates to 4-methyl-2 oxopentanoate. The polypeptide is 3-isopropylmalate dehydrogenase (LEU2) (Candida boidinii (Yeast)).